A 254-amino-acid polypeptide reads, in one-letter code: 3-deoxy-manno-octulosonate cytidylyltransferase (254 aa).

It belongs to the KdsB family.

The protein resides in the cytoplasm. It carries out the reaction 3-deoxy-alpha-D-manno-oct-2-ulosonate + CTP = CMP-3-deoxy-beta-D-manno-octulosonate + diphosphate. It functions in the pathway nucleotide-sugar biosynthesis; CMP-3-deoxy-D-manno-octulosonate biosynthesis; CMP-3-deoxy-D-manno-octulosonate from 3-deoxy-D-manno-octulosonate and CTP: step 1/1. Its pathway is bacterial outer membrane biogenesis; lipopolysaccharide biosynthesis. In terms of biological role, activates KDO (a required 8-carbon sugar) for incorporation into bacterial lipopolysaccharide in Gram-negative bacteria. The sequence is that of 3-deoxy-manno-octulosonate cytidylyltransferase from Nitrobacter winogradskyi (strain ATCC 25391 / DSM 10237 / CIP 104748 / NCIMB 11846 / Nb-255).